A 211-amino-acid polypeptide reads, in one-letter code: Protein crossbronx-like (211 aa).

In terms of domain architecture, UBC core spans 17–177 (NQGYQILAEY…VRNSILWSCK (161 aa)).

It belongs to the ubiquitin-conjugating enzyme family. FTS subfamily.

This chain is Protein crossbronx-like, found in Drosophila grimshawi (Hawaiian fruit fly).